Consider the following 887-residue polypeptide: MDWQPDEQGLQQVLQLLKDSQSPNTATQRIVQDKLKQLNQFPDFNNYLIFVLTRLKSEDEPTRSLSGLILKNNVKAHYQSFPPPVADFIKQECLNNIGDASSLIRATIGILITTIASKGELQMWPELLPQLCNLLNSEDYNTCEGAFGALQKICEDSSELLDSDALNRPLNIMIPKFLQFFKHCSPKIRSHAIACVNQFIMDRAQALMDNIDTFIEHLFALAVDDDPEVRKNVCRALVMLLEVRIDRLIPHMHSIIQYMLQRTQDHDENVALEACEFWLTLAEQPICKEVLASHLVQLIPILVNGMKYSEIDIILLKGDVEEDEAVPDSEQDIKPRFHKSRTVTLTHEAERPDSSEDAEDDDDDDALSDWNLRKCSAAALDVLANVFREELLPHLLPLLKGLLFHPEWVVKESGILVLGAIAEGCMQGMVPYLPELIPHLIQCLSDKKALVRSIACWTLSRYAHWVVSQPPDMHLKPLMTELLKRILDGNKRVQEAACSAFATLEEEACTELVPYLSYILDTLVFAFGKYQHKNLLILYDAIGTLADSVGHHLNQPEYIQKLMPPLIQKWNELKDEDKDLFPLLECLSSVATALQSGFLPYCEPVYQRCVTLVQKTLAQAMMYTQHPEQYEAPDKDFMIVALDLLSGLAEGLGGHVEQLVARSNIMTLLFQCMQDSMPEVRQSSFALLGDLTKACFIHVKPCIAEFMPILGTNLNPEFISVCNNATWAIGEICMQMGAEMQPYVQMVLNNLVEIINRPNTPKTLLENTAITIGRLGYVCPQEVAPMLQQFIRPWCTSLRNIRDNEEKDSAFRGICMMIGVNPGGVVQDFIFFCDAVASWVSPKDDLRDMFYKILHGFKDQVGEENWQQFSEQFPPLLKERLAAFYGV.

20 HEAT repeats span residues 9 to 36 (GLQQ…DKLK), 41 to 79 (FPDF…AHYQ), 88 to 121 (FIKQ…KGEL), 127 to 164 (LLPQ…LDSD), 171 to 201 (NIMI…QFIM), 214 to 241 (FIEH…VMLL), 253 to 280 (HSII…FWLT), 296 to 386 (VQLI…LANV), 394 to 422 (HLLP…GAIA), 434 to 461 (PELI…TLSR), 475 to 508 (LKPL…EEEA), 516 to 549 (LSYI…ADSV), 557 to 595 (EYIQ…TALQ), 603 to 654 (EPVY…GLGG), 665 to 696 (IMTL…KACF), 704 to 737 (AEFM…MQMG), 745 to 780 (QMVL…YVCP), 788 to 821 (QQFI…IGVN), 830 to 861 (IFFC…KDQV), and 864 to 884 (ENWQ…LAAF). Residues 31–99 (VQDKLKQLNQ…KQECLNNIGD (69 aa)) form the Importin N-terminal domain. The disordered stretch occupies residues 344–363 (TLTHEAERPDSSEDAEDDDD). Lys852 bears the N6-acetyllysine mark.

Belongs to the importin beta family. Importin beta-2 subfamily.

It localises to the cytoplasm. It is found in the nucleus. In terms of biological role, probably functions in nuclear protein import as nuclear transport receptor. Serves as receptor for nuclear localization signals (NLS) in cargo substrates. Is thought to mediate docking of the importin/substrate complex to the nuclear pore complex (NPC) through binding to nucleoporin and the complex is subsequently translocated through the pore by an energy requiring, Ran-dependent mechanism. At the nucleoplasmic side of the NPC, Ran binds to the importin, the importin/substrate complex dissociates and importin is re-exported from the nucleus to the cytoplasm where GTP hydrolysis releases Ran. The directionality of nuclear import is thought to be conferred by an asymmetric distribution of the GTP- and GDP-bound forms of Ran between the cytoplasm and nucleus. The protein is Transportin-2 (Tnpo2) of Mus musculus (Mouse).